The primary structure comprises 75 residues: Small, acid-soluble spore protein Tlp (75 aa).

This sequence belongs to the Tlp family.

It is found in the spore core. The chain is Small, acid-soluble spore protein Tlp from Geobacillus kaustophilus (strain HTA426).